Here is a 571-residue protein sequence, read N- to C-terminus: Optineurin (571 aa).

Disordered regions lie at residues 1-32 (MSHQPLSCLTEKGDSPSESTGNGPPHLAHPNL) and 100-144 (LSHE…DQLR). A coiled-coil region spans residues 38 to 170 (EELLQQMKEL…VSELQLKLNS (133 aa)). The interval 58–209 (MKLNNQAMKG…GPTRTVSIGT (152 aa)) is interaction with Rab8. Over residues 100–143 (LSHENEKLKEELGKLKGKSERSSEDPTDDSRLPRAEAEQEKDQL) the composition is skewed to basic and acidic residues. Residues 176-181 (DSFVEI) carry the LIR motif. The residue at position 177 (Ser-177) is a Phosphoserine; by TBK1. The segment covering 186 to 197 (GEAEGSVKEIKH) has biased composition (basic and acidic residues). 2 disordered regions span residues 186-210 (GEAEGSVKEIKHSPGPTRTVSIGTS) and 255-291 (VSDFEKKASNRSEIETQTEGSTEKENEEEKGPETVGS). Residue Ser-198 is modified to Phosphoserine. The span at 201-210 (PTRTVSIGTS) shows a compositional bias: polar residues. A coiled-coil region spans residues 233–502 (CLREGNQKVE…LLKENDAFED (270 aa)). Composition is skewed to basic and acidic residues over residues 255–268 (VSDFEKKASNRSEI) and 275–286 (STEKENEEEKGP). Ser-336 carries the phosphoserine modification. An interaction with HD region spans residues 405-571 (TRKESEKVDR…LQIHVMDCII (167 aa)). Residues 406 to 514 (RKESEKVDRA…RQSLMEMQSR (109 aa)) are interaction with MYO6. Positions 468-473 (DFHAER) match the UBAN motif. Ser-520 carries the phosphoserine modification. The CCHC NOA-type zinc-finger motif lies at 541–571 (QRNIPIHSCPKCGEVLPDIDTLQIHVMDCII). Positions 549, 552, 565, and 569 each coordinate Zn(2+).

As to quaternary structure, self-associates. Interacts with HD. Interacts with GTF3A. Interacts with MYO6. Interacts (via UBAN) with ubiquitinated TFRC. Interacts with GTP-bound Rab8 (RAB8A and/or RAB8B). Interacts with TBC1D17. Interacts with TBK1. Interacts with TRAF3. Binds to linear ubiquitin chains. Interacts with LC3 family members MAP1LC3A, MAP1LC3B, GABARAP, GABARAPL1 and GABARAPL2; OPTN phosphorylation increases the association (at least with MAP1LC3B). Interacts with RAB12; the interaction may be indirect. Interacts with TBK1; this interaction leads to the Golgi localization of TBK1 and its subsequent activation. Interacts with palmitoyltransferase ZDHHC17/HIP14; the interaction does not lead to palmitoylation of OPTN. Interacts with CYLD. Interacts with TOM1; the interaction is indirect and is mediated by MYO6, which acts as a bridge between TOM1 and OPTN. Interacts with USP12; the interaction is independent of USP12 deubiquitinase activity and may be involved in regulation of autophagic flux. In terms of processing, phosphorylated by TBK1, leading to restrict bacterial proliferation in case of infection. As to expression, present in aqueous humor of the eye (at protein level).

The protein localises to the cytoplasm. It is found in the perinuclear region. Its subcellular location is the golgi apparatus. It localises to the trans-Golgi network. The protein resides in the cytoplasmic vesicle. The protein localises to the autophagosome. It is found in the recycling endosome. Functionally, plays an important role in the maintenance of the Golgi complex, in membrane trafficking, in exocytosis, through its interaction with myosin VI and Rab8. Links myosin VI to the Golgi complex and plays an important role in Golgi ribbon formation. Negatively regulates the induction of IFNB in response to RNA virus infection. Plays a neuroprotective role in the eye and optic nerve. Probably part of the TNF-alpha signaling pathway that can shift the equilibrium toward induction of cell death. May act by regulating membrane trafficking and cellular morphogenesis via a complex that contains Rab8 and huntingtin (HD). Mediates the interaction of Rab8 with the probable GTPase-activating protein TBC1D17 during Rab8-mediated endocytic trafficking, such as that of transferrin receptor (TFRC/TfR); regulates Rab8 recruitment to tubules emanating from the endocytic recycling compartment. Autophagy receptor that interacts directly with both the cargo to become degraded and an autophagy modifier of the MAP1 LC3 family; targets ubiquitin-coated bacteria (xenophagy) and appears to function in the same pathway as SQSTM1 and CALCOCO2/NDP52. This is Optineurin (OPTN) from Macaca mulatta (Rhesus macaque).